A 1040-amino-acid polypeptide reads, in one-letter code: Multidrug resistance protein MdtB (1040 aa).

The next 12 membrane-spanning stretches (helical) occupy residues 16–36 (FIMRPVATTLLMVAILLAGII), 342–362 (DTQFELMLAIALVVMIIYLFL), 369–389 (IIPGVAVPLSLVGTFAVMVFL), 396–416 (LTLMALTIATGFVVDDAIVVI), 440–460 (IGFTIISLTFSLIAVLIPLLF), 472–492 (FAVTLAVAILISAVVSLTLTP), 537–557 (WLTLGVALSTLALSIILWVFI), 863–883 (LGSTVWLVVAAVVAMYIVLGV), 888–908 (FIHPITILSTLPTAGVGALLA), 911–931 (LAGSELDVIAIIGIILLIGIV), 968–988 (ILMTTLAALLGALPLMLSTGV), and 998–1018 (IGMVGGLMLSQVLTLFTTPVI).

The protein belongs to the resistance-nodulation-cell division (RND) (TC 2.A.6) family. MdtB subfamily. As to quaternary structure, part of a tripartite efflux system composed of MdtA, MdtB and MdtC. MdtB forms a heteromultimer with MdtC.

It is found in the cell inner membrane. This is Multidrug resistance protein MdtB from Klebsiella pneumoniae subsp. pneumoniae (strain ATCC 700721 / MGH 78578).